We begin with the raw amino-acid sequence, 547 residues long: Alpha-humulene/(-)-(E)-beta-caryophyllene synthase (547 aa).

Arg262, Asp299, Asp303, Arg442, and Asp445 together coordinate (2E,6E)-farnesyl diphosphate. Mg(2+) contacts are provided by Asp299 and Asp303. The DDXXD motif signature appears at 299–303; the sequence is DDMYD. Mg(2+) is bound by residues Asp445, Asp446, Ser449, and Glu453.

Belongs to the terpene synthase family. Tpsa subfamily. Monomer. Mg(2+) serves as cofactor. It depends on Mn(2+) as a cofactor. In terms of tissue distribution, expressed exclusively in flowers. Expressed in the flower stigmata and also detected in the mesocarp cell layers of the silique wall.

It localises to the cytoplasm. It catalyses the reaction (2E,6E)-farnesyl diphosphate = (-)-(E)-beta-caryophyllene + diphosphate. The catalysed reaction is (2E,6E)-farnesyl diphosphate = alpha-copaene + diphosphate. The enzyme catalyses (2E,6E)-farnesyl diphosphate = alpha-humulene + diphosphate. It carries out the reaction (2E,6E)-farnesyl diphosphate = (1S,2S,4R)-beta-elemene + diphosphate. It functions in the pathway secondary metabolite biosynthesis; terpenoid biosynthesis. Functionally, involved in sesquiterpene (C15) biosynthesis. The major products are beta-caryophyllene and alpha-humulene. Does not convert geranyl diphosphate (GPP) to any monoterpenes. This chain is Alpha-humulene/(-)-(E)-beta-caryophyllene synthase, found in Arabidopsis thaliana (Mouse-ear cress).